The chain runs to 111 residues: Cyanovirin-N homolog (111 aa).

This sequence belongs to the cyanovirin-N family.

Functionally, mannose-binding lectin. The polypeptide is Cyanovirin-N homolog (Neurospora crassa (strain ATCC 24698 / 74-OR23-1A / CBS 708.71 / DSM 1257 / FGSC 987)).